We begin with the raw amino-acid sequence, 450 residues long: Putative nucleolar protein 5-3 (450 aa).

Residues 252 to 370 (IAPNLTALVG…LEARLRNLEG (119 aa)) form the Nop domain. The tract at residues 375 to 423 (ACEEEEEVNDKDTKKEADDEEEPKTEECSKKRKKEAELETVEDPAKKSK) is disordered. Residues 399–423 (TEECSKKRKKEAELETVEDPAKKSK) show a composition bias toward basic and acidic residues.

Belongs to the NOP5/NOP56 family.

Its subcellular location is the nucleus. The protein resides in the nucleolus. Functionally, required for 60S ribosomal subunit biogenesis. The chain is Putative nucleolar protein 5-3 (NOP5-3) from Arabidopsis thaliana (Mouse-ear cress).